Consider the following 86-residue polypeptide: BaSO(4)-adsorbing protein 1 (86 aa).

3 cysteine pairs are disulfide-bonded: cysteine 6–cysteine 22, cysteine 18–cysteine 49, and cysteine 39–cysteine 54. Residues 58–86 (GDSASNTQNQGGSRRQENEDQGDDEWDRK) form a disordered region. The span at 59-70 (DSASNTQNQGGS) shows a compositional bias: polar residues. The segment covering 76–86 (EDQGDDEWDRK) has biased composition (acidic residues).

As to expression, salivary gland (at protein level).

It localises to the secreted. Inhibits lectin and classical pathways of complement system activation in the host with no significant effect on the alternative pathway. Inhibits host extrinsic blood coagulation pathway but not the intrinsic cascade. Binds to neutral and negatively charged membranes in vitro; binding is reduced upon pre-incubation with Ca(2+). In Ornithodoros savignyi (African eyed tampan), this protein is BaSO(4)-adsorbing protein 1.